Here is a 221-residue protein sequence, read N- to C-terminus: Holliday junction branch migration complex subunit RuvA (221 aa).

A domain I region spans residues 1 to 61 (MQIYQFGKIV…DYTKITYGFA (61 aa)). The segment at 62 to 139 (SFRERILFED…RFNENHKNQT (78 aa)) is domain II. Residues 133–155 (ENHKNQTEETNQDSQEKELEKKD) form a disordered region. Residues 140-166 (EETNQDSQEKELEKKDDLADITIQKSN) are flexible linker. Basic and acidic residues predominate over residues 146–155 (SQEKELEKKD). Residues 167–221 (LEDKTAANLEDTLKMLGFKPRQIDYALTKVEPNENFENLIENAIKIISNAREFRN) are domain III.

The protein belongs to the RuvA family. As to quaternary structure, homotetramer. Forms an RuvA(8)-RuvB(12)-Holliday junction (HJ) complex. HJ DNA is sandwiched between 2 RuvA tetramers; dsDNA enters through RuvA and exits via RuvB. An RuvB hexamer assembles on each DNA strand where it exits the tetramer. Each RuvB hexamer is contacted by two RuvA subunits (via domain III) on 2 adjacent RuvB subunits; this complex drives branch migration. In the full resolvosome a probable DNA-RuvA(4)-RuvB(12)-RuvC(2) complex forms which resolves the HJ.

The protein localises to the cytoplasm. The RuvA-RuvB-RuvC complex processes Holliday junction (HJ) DNA during genetic recombination and DNA repair, while the RuvA-RuvB complex plays an important role in the rescue of blocked DNA replication forks via replication fork reversal (RFR). RuvA specifically binds to HJ cruciform DNA, conferring on it an open structure. The RuvB hexamer acts as an ATP-dependent pump, pulling dsDNA into and through the RuvAB complex. HJ branch migration allows RuvC to scan DNA until it finds its consensus sequence, where it cleaves and resolves the cruciform DNA. This chain is Holliday junction branch migration complex subunit RuvA, found in Mesomycoplasma hyopneumoniae (strain J / ATCC 25934 / NCTC 10110) (Mycoplasma hyopneumoniae).